Here is a 38-residue protein sequence, read N- to C-terminus: Defensin D7 (38 aa).

Belongs to the DEFL family. Group IV subfamily. Distributed in the epidermal cell layer of leaves and in the subepidermal layer region of stems. Not in roots.

The protein resides in the secreted. The protein localises to the cell wall. Functionally, antimicrobial peptide. Active against Fusarium spp., Gram-positive and Gram-negative bacterial pathogens. This Spinacia oleracea (Spinach) protein is Defensin D7.